Here is a 770-residue protein sequence, read N- to C-terminus: MVSAAWLRYPSLLTLGILVSRVAAQYEGDVLRYVDQLVGTANGGHAFPGASLPYGMAKAVADVDGSENYGGFTTEGSNVTGFSHMHDSGTGGKPSMGNFPLVPQICQDDDINKCKFSKEDRAVHYIADSVKARPGYFAIKLNNGIAAEMTVTEHAALYHFDFPHNNAESNGKLPVILVDLTDIQDSRQNAAISLDEDTLRVKANGTFLPSFGIGTYKSFVCVDFSGAEAKDTGIYISNRAGTQPKAISVGRGFNLFYIKAGTYLQFQASSNGPTRVSARVGLSFINEDQACKNAEKEIPGSNWDFEKVRTDAESAWKEKLGLISLKSGGVSDIFQRTFWSAIYRSMISPQDYTGENPLWQSKEPYFDSFYCLLDTYKHQGWLPDCHMSLCKGFTQSGSNADVVIADAYVKSISDNIDWDLAYEAVVKDAEVEPPDWSVEGRGGLMSWKSVGYIPAQDYDYLGTGITTRSISRTVEYSYNDYCVGVLGKGLGKEHEKYFQRSGNWQNLFKADQTSFIDGKDTGFVGFFQPRYYNGTWGYQDPILCSNIAAFCSLTSNSQETYESGIWENQFFVPHDMSTLINLLGGRSKFVARLDYLHDSNILYIGNEPSFLATFLYHYAGRPALSAKRAHTYIPSRFNDTTTGVPGNDDSGAMGSFTVFAMMGLFPNPGQNVYFIMPPFFEAVSIKHPVTGKTATVRNVNFDSKYENVYIQRATLNGKEYTRNWIGHEFFLNGGTLELTLGKEESSWGTGQNDVPPSLGAGIKRDGLRFT.

An N-terminal signal peptide occupies residues 1-24; the sequence is MVSAAWLRYPSLLTLGILVSRVAA. Residues Asn78, Asn204, Asn533, and Asn638 are each glycosylated (N-linked (GlcNAc...) asparagine). Residues 746-770 are disordered; that stretch reads SWGTGQNDVPPSLGAGIKRDGLRFT.

This sequence belongs to the glycosyl hydrolase 92 family.

It localises to the secreted. This is an uncharacterized protein from Arthroderma benhamiae (strain ATCC MYA-4681 / CBS 112371) (Trichophyton mentagrophytes).